We begin with the raw amino-acid sequence, 677 residues long: Methionine--tRNA ligase (677 aa).

Positions 15–25 (PYANGSIHLGH) match the 'HIGH' region motif. Residues Cys-146, Cys-149, Cys-159, and Cys-162 each contribute to the Zn(2+) site. Positions 333 to 337 (KMSKS) match the 'KMSKS' region motif. An ATP-binding site is contributed by Lys-336. One can recognise a tRNA-binding domain in the interval 575-677 (DFAKVDLRVA…AGAKPGHQVK (103 aa)).

It belongs to the class-I aminoacyl-tRNA synthetase family. MetG type 1 subfamily. In terms of assembly, homodimer. Zn(2+) serves as cofactor.

The protein resides in the cytoplasm. It catalyses the reaction tRNA(Met) + L-methionine + ATP = L-methionyl-tRNA(Met) + AMP + diphosphate. Functionally, is required not only for elongation of protein synthesis but also for the initiation of all mRNA translation through initiator tRNA(fMet) aminoacylation. This Shigella dysenteriae serotype 1 (strain Sd197) protein is Methionine--tRNA ligase.